A 178-amino-acid polypeptide reads, in one-letter code: uncharacterized protein (178 aa).

2 helical membrane-spanning segments follow: residues 6–26 (AIFG…VSGL) and 154–174 (KELV…AMLI).

The protein localises to the cell membrane. This is an uncharacterized protein from Methanocaldococcus jannaschii (strain ATCC 43067 / DSM 2661 / JAL-1 / JCM 10045 / NBRC 100440) (Methanococcus jannaschii).